A 52-amino-acid polypeptide reads, in one-letter code: uncharacterized protein (52 aa).

A helical transmembrane segment spans residues 21 to 40 (VAMNSYVELLFLSVPLIHIF).

Its subcellular location is the cell membrane. This is an uncharacterized protein from Bacillus subtilis (strain 168).